We begin with the raw amino-acid sequence, 285 residues long: Glutamate racemase (285 aa).

Residues 28 to 29 (DS) and 60 to 61 (YG) each bind substrate. The Proton donor/acceptor role is filled by Cys-92. Substrate is bound at residue 93–94 (NT). Cys-204 serves as the catalytic Proton donor/acceptor. 205 to 206 (TH) contacts substrate.

Belongs to the aspartate/glutamate racemases family.

It carries out the reaction L-glutamate = D-glutamate. It participates in cell wall biogenesis; peptidoglycan biosynthesis. Its function is as follows. Provides the (R)-glutamate required for cell wall biosynthesis. This Escherichia coli O9:H4 (strain HS) protein is Glutamate racemase.